Here is a 58-residue protein sequence, read N- to C-terminus: Small ribosomal subunit protein bS21 (58 aa).

Residues 35-58 form a disordered region; the sequence is REHYEKPSVKRKKKSEAARKRKFK. A compositionally biased stretch (basic residues) spans 43–58; it reads VKRKKKSEAARKRKFK.

Belongs to the bacterial ribosomal protein bS21 family.

The chain is Small ribosomal subunit protein bS21 from Ruminiclostridium cellulolyticum (strain ATCC 35319 / DSM 5812 / JCM 6584 / H10) (Clostridium cellulolyticum).